A 363-amino-acid chain; its full sequence is D-alanine--D-alanine ligase (363 aa).

The ATP-grasp domain occupies 146-352; that stretch reads KLCAADAGVA…FTALIDKLLH (207 aa). 179 to 234 contacts ATP; it reads DSTFGYPLFVKPASLGSSVGISKVHLPAALPEALKVACSYDRKILVEAAVSGKEIE. D305, E319, and N321 together coordinate Mg(2+).

It belongs to the D-alanine--D-alanine ligase family. Requires Mg(2+) as cofactor. It depends on Mn(2+) as a cofactor.

It localises to the cytoplasm. The enzyme catalyses 2 D-alanine + ATP = D-alanyl-D-alanine + ADP + phosphate + H(+). It participates in cell wall biogenesis; peptidoglycan biosynthesis. In terms of biological role, cell wall formation. The polypeptide is D-alanine--D-alanine ligase (Chlorobium limicola (strain DSM 245 / NBRC 103803 / 6330)).